A 162-amino-acid chain; its full sequence is 2-C-methyl-D-erythritol 2,4-cyclodiphosphate synthase (162 aa).

A divalent metal cation is bound by residues Asp-10 and His-12. 4-CDP-2-C-methyl-D-erythritol 2-phosphate-binding positions include 10-12 (DVH) and 36-37 (HS). His-44 is an a divalent metal cation binding site. Residues 58 to 60 (DIG), 63 to 67 (FSDTD), and Arg-144 each bind 4-CDP-2-C-methyl-D-erythritol 2-phosphate.

It belongs to the IspF family. In terms of assembly, homotrimer. A divalent metal cation serves as cofactor.

It catalyses the reaction 4-CDP-2-C-methyl-D-erythritol 2-phosphate = 2-C-methyl-D-erythritol 2,4-cyclic diphosphate + CMP. Its pathway is isoprenoid biosynthesis; isopentenyl diphosphate biosynthesis via DXP pathway; isopentenyl diphosphate from 1-deoxy-D-xylulose 5-phosphate: step 4/6. Its function is as follows. Involved in the biosynthesis of isopentenyl diphosphate (IPP) and dimethylallyl diphosphate (DMAPP), two major building blocks of isoprenoid compounds. Catalyzes the conversion of 4-diphosphocytidyl-2-C-methyl-D-erythritol 2-phosphate (CDP-ME2P) to 2-C-methyl-D-erythritol 2,4-cyclodiphosphate (ME-CPP) with a corresponding release of cytidine 5-monophosphate (CMP). The chain is 2-C-methyl-D-erythritol 2,4-cyclodiphosphate synthase from Burkholderia thailandensis (strain ATCC 700388 / DSM 13276 / CCUG 48851 / CIP 106301 / E264).